A 182-amino-acid polypeptide reads, in one-letter code: Orotate phosphoribosyltransferase (182 aa).

Residues R96, K97, K100, H102, and 122–130 contribute to the 5-phospho-alpha-D-ribose 1-diphosphate site; that span reads EDTSTTGGS. The orotate site is built by T126 and R154.

The protein belongs to the purine/pyrimidine phosphoribosyltransferase family. PyrE subfamily. As to quaternary structure, homodimer. Mg(2+) is required as a cofactor.

It carries out the reaction orotidine 5'-phosphate + diphosphate = orotate + 5-phospho-alpha-D-ribose 1-diphosphate. The protein operates within pyrimidine metabolism; UMP biosynthesis via de novo pathway; UMP from orotate: step 1/2. Catalyzes the transfer of a ribosyl phosphate group from 5-phosphoribose 1-diphosphate to orotate, leading to the formation of orotidine monophosphate (OMP). This is Orotate phosphoribosyltransferase from Streptomyces coelicolor (strain ATCC BAA-471 / A3(2) / M145).